We begin with the raw amino-acid sequence, 386 residues long: Cytochrome b (386 aa).

Transmembrane regions (helical) follow at residues 32–52 (FGSL…TLAM), 76–98 (WLIR…LHMG), 113–133 (TWNI…LGYV), and 179–199 (FFSL…MHLI). The heme b site is built by H82 and H96. The heme b site is built by H183 and H197. Residue H202 coordinates a ubiquinone. Helical transmembrane passes span 226–246 (FLFK…IFVL), 290–310 (TLGV…PYLD), 322–342 (LSKI…ILGA), and 349–369 (FIIF…IITP).

This sequence belongs to the cytochrome b family. Fungal cytochrome b-c1 complex contains 10 subunits; 3 respiratory subunits, 2 core proteins and 5 low-molecular weight proteins. Cytochrome b-c1 complex is a homodimer. Requires heme b as cofactor.

It localises to the mitochondrion inner membrane. Its function is as follows. Component of the ubiquinol-cytochrome c reductase complex (complex III or cytochrome b-c1 complex) that is part of the mitochondrial respiratory chain. The b-c1 complex mediates electron transfer from ubiquinol to cytochrome c. Contributes to the generation of a proton gradient across the mitochondrial membrane that is then used for ATP synthesis. The chain is Cytochrome b (COB) from Trichophyton rubrum (Athlete's foot fungus).